A 260-amino-acid chain; its full sequence is UPF0328 protein ECU07_1870/ECU10_0030 (260 aa).

Belongs to the UPF0328 family.

The chain is UPF0328 protein ECU07_1870/ECU10_0030 from Encephalitozoon cuniculi (strain GB-M1) (Microsporidian parasite).